The following is a 315-amino-acid chain: Fucose-specific lectin (315 aa).

6 tandem repeats follow at residues 2 to 53 (STPG…KNVI), 54 to 103 (GNAK…GGAK), 104 to 155 (FQVA…LGGA), 156 to 207 (LPGT…TIFD), 208 to 260 (RAPP…ITPV), and 261 to 315 (IQGS…LPPA). Residues 2 to 315 (STPGAQQVLF…QLGRSALPPA (314 aa)) are 6 X approximate tandem repeats. Arg25, Glu37, Trp44, Arg73, Glu85, Trp94, Gly98, Arg126, Glu138, Trp146, Thr150, Arg177, Gln189, Trp198, Arg230, and Gln242 together coordinate alpha-L-fucose. Cys244, Asp246, and His252 together coordinate Zn(2+). Arg282 and Glu296 together coordinate alpha-L-fucose.

This sequence belongs to the fungal fucose-specific lectin family. Homodimer.

Its function is as follows. Multispecific lectin that is able to recognize L-fucose in all possible linkages. These could be found not only in decomposed plant matter in soil, which is the natural environment for A.fumigatus, but also in various epitopes on human tissues. Mediates binding of A.fumigatus conidia to airway mucin in a fucose dependent manner. Stimulates IL-8 production by human bronchial cells in a dose-dependent manner, contributing to the inflammatory response observed upon the exposure of a patient to A.fumigatus, and thus might be an important virulence factor involved in an early stage of A.fumigatus infection. The chain is Fucose-specific lectin from Aspergillus fumigatus (strain ATCC MYA-4609 / CBS 101355 / FGSC A1100 / Af293) (Neosartorya fumigata).